The chain runs to 448 residues: Bifunctional protein GlmU (448 aa).

The pyrophosphorylase stretch occupies residues 1-232; sequence MTARSSLTIV…EDEVRGINTK (232 aa). UDP-N-acetyl-alpha-D-glucosamine is bound by residues 11–14, Lys25, Gln78, and 83–84; these read LAAG and GT. Position 108 (Asp108) interacts with Mg(2+). The UDP-N-acetyl-alpha-D-glucosamine site is built by Gly144, Glu158, Asn173, and Asn230. Asn230 is a binding site for Mg(2+). The interval 233 to 253 is linker; that stretch reads AQLAQAEAAMQARLRQAAMDA. The tract at residues 254–448 is N-acetyltransferase; sequence GVTLIAPETV…FRNAKLRQTK (195 aa). Positions 319 and 337 each coordinate UDP-N-acetyl-alpha-D-glucosamine. Catalysis depends on His349, which acts as the Proton acceptor. Positions 352 and 363 each coordinate UDP-N-acetyl-alpha-D-glucosamine. Residues Ala366, 372 to 373, Ser409, and Arg426 each bind acetyl-CoA; that span reads NY. A disordered region spans residues 427 to 448; it reads SPQTTKEGAAARFRNAKLRQTK.

It in the N-terminal section; belongs to the N-acetylglucosamine-1-phosphate uridyltransferase family. The protein in the C-terminal section; belongs to the transferase hexapeptide repeat family. In terms of assembly, homotrimer. Mg(2+) serves as cofactor.

It is found in the cytoplasm. The catalysed reaction is alpha-D-glucosamine 1-phosphate + acetyl-CoA = N-acetyl-alpha-D-glucosamine 1-phosphate + CoA + H(+). It carries out the reaction N-acetyl-alpha-D-glucosamine 1-phosphate + UTP + H(+) = UDP-N-acetyl-alpha-D-glucosamine + diphosphate. It participates in nucleotide-sugar biosynthesis; UDP-N-acetyl-alpha-D-glucosamine biosynthesis; N-acetyl-alpha-D-glucosamine 1-phosphate from alpha-D-glucosamine 6-phosphate (route II): step 2/2. Its pathway is nucleotide-sugar biosynthesis; UDP-N-acetyl-alpha-D-glucosamine biosynthesis; UDP-N-acetyl-alpha-D-glucosamine from N-acetyl-alpha-D-glucosamine 1-phosphate: step 1/1. It functions in the pathway bacterial outer membrane biogenesis; LPS lipid A biosynthesis. Functionally, catalyzes the last two sequential reactions in the de novo biosynthetic pathway for UDP-N-acetylglucosamine (UDP-GlcNAc). The C-terminal domain catalyzes the transfer of acetyl group from acetyl coenzyme A to glucosamine-1-phosphate (GlcN-1-P) to produce N-acetylglucosamine-1-phosphate (GlcNAc-1-P), which is converted into UDP-GlcNAc by the transfer of uridine 5-monophosphate (from uridine 5-triphosphate), a reaction catalyzed by the N-terminal domain. The protein is Bifunctional protein GlmU of Bradyrhizobium sp. (strain ORS 278).